Consider the following 682-residue polypeptide: L-type lectin-domain containing receptor kinase VI.2 (682 aa).

The first 26 residues, 1–26 (MGTQRSMFIVSFLFKLFLFLSVHVRA), serve as a signal peptide directing secretion. Residues 27–310 (QRTTTNFAFR…AKKEGLNSQV (284 aa)) are Extracellular-facing. The legume-lectin like stretch occupies residues 29–277 (TTTNFAFRGF…AHYVMGWSFS (249 aa)). Residues 311 to 331 (IVMIVALSAVMLVMLVLLFFF) traverse the membrane as a helical segment. Residues 332–682 (VMYKKRLGQE…RVSSTSRISQ (351 aa)) lie on the Cytoplasmic side of the membrane. One can recognise a Protein kinase domain in the interval 367 to 641 (FKKTGIIGTG…LRYLNGEENV (275 aa)). ATP is bound by residues 373–381 (IGTGGFGTV) and lysine 395. Aspartate 494 (proton acceptor) is an active-site residue.

In the C-terminal section; belongs to the protein kinase superfamily. Ser/Thr protein kinase family. This sequence in the N-terminal section; belongs to the leguminous lectin family. As to expression, strongly expressed in the vascular system and trichomes of the leaves. Also expressed in guard cells, anthers, stigmas and germinating seeds, but not found in petals or roots. Increased susceptibility to the bacteria Pseudomonas syringae, characterized by stronger necrotic symptoms and higher bacterial proliferation.

It localises to the cell membrane. It carries out the reaction L-seryl-[protein] + ATP = O-phospho-L-seryl-[protein] + ADP + H(+). The enzyme catalyses L-threonyl-[protein] + ATP = O-phospho-L-threonyl-[protein] + ADP + H(+). Its function is as follows. Involved in negative regulation of abscisic acid response in seed germination. In terms of biological role, involved in resistance response to the pathogenic bacteria Pseudomonas syringae. In Arabidopsis thaliana (Mouse-ear cress), this protein is L-type lectin-domain containing receptor kinase VI.2.